We begin with the raw amino-acid sequence, 204 residues long: CLAVATA3/ESR (CLE)-related protein 1 (204 aa).

An N-terminal signal peptide occupies residues 1–21 (MAKNAMLCLLILSVVLALAFA). The segment at 21 to 83 (ATNEKDDKEA…SNQLQNAYRM (63 aa)) is required for secretion from the host cytoplasm to the host apoplasm. A glycan (N-linked (GlcNAc...) asparagine) is linked at Asn-32. Residues 116-204 (RNTGMKPQSY…TPGVPDRQHR (89 aa)) are disordered. 3 stretches are compositionally biased toward basic and acidic residues: residues 139–151 (LHNREKILEEQKR), 160–172 (LHNREKTLEEQKR), and 181–193 (LHNREKTLEEQKR). Propeptides (removed in mature form) lie at residues 142 to 150 (REKILEEQK), 163 to 171 (REKTLEEQK), and 184 to 192 (REKTLEEQK).

This sequence belongs to the CLV3/ESR signal peptide family. In terms of processing, preprocessing of the precursor by host proteases leads first to the production of 21-mer CLE-containing peptides (Arg-130 to Lys-150, Arg-151 to Lys-171 and Arg-172 to Lys-192) followed by an ultimate C-term trimming to give the mature 12-mer CLE1-1 peptide. In terms of tissue distribution, highly expressed exclusively within the dorsal esophageal gland cell during syncytium formation in host plants.

It is found in the secreted. Its subcellular location is the host cytoplasm. The protein localises to the host extracellular space. The protein resides in the extracellular space. It localises to the apoplast. In terms of biological role, mimics host plant CLE extracellular signal peptides that regulate cell fate. May play a role in the differentiation or division of feeding cells (syncytia) induced in plant roots during infection. In Globodera rostochiensis (Golden nematode worm), this protein is CLAVATA3/ESR (CLE)-related protein 1.